The sequence spans 101 residues: Protein RALF-like 14 (101 aa).

The signal sequence occupies residues 1–21; that stretch reads MKLLIFAVIISVVLFPVLVSS. The propeptide at 22 to 56 is removed in mature form; sequence RTIKCDQLSGKCINGEEKEIMNMRLGLDVSSRRIL. Residues C90 and C96 are joined by a disulfide bond.

Belongs to the plant rapid alkalinization factor (RALF) family. In terms of processing, proteolytically cleaved, probably by S1P, a subtilisin-like serine protease (subtilase).

Its subcellular location is the secreted. Its function is as follows. Cell signaling peptide that may regulate plant stress, growth, and development. Mediates a rapid alkalinization of extracellular space by mediating a transient increase in the cytoplasmic Ca(2+) concentration leading to a calcium-dependent signaling events through a cell surface receptor and a concomitant activation of some intracellular mitogen-activated protein kinases. The protein is Protein RALF-like 14 (RALFL14) of Arabidopsis thaliana (Mouse-ear cress).